The chain runs to 968 residues: Phosphoenolpyruvate carboxylase (968 aa).

Position 11 is a phosphoserine (S11). Catalysis depends on residues H172 and K602.

The protein belongs to the PEPCase type 1 family. As to quaternary structure, homotetramer. Mg(2+) is required as a cofactor.

The protein resides in the cytoplasm. The enzyme catalyses oxaloacetate + phosphate = phosphoenolpyruvate + hydrogencarbonate. By light-reversible phosphorylation. Through the carboxylation of phosphoenolpyruvate (PEP) it forms oxaloacetate, a four-carbon dicarboxylic acid source for the tricarboxylic acid cycle. In Phaseolus vulgaris (Kidney bean), this protein is Phosphoenolpyruvate carboxylase.